A 371-amino-acid chain; its full sequence is Pyruvate dehydrogenase E1 component subunit alpha (371 aa).

In terms of assembly, heterodimer of an alpha and a beta chain. Thiamine diphosphate serves as cofactor.

It catalyses the reaction N(6)-[(R)-lipoyl]-L-lysyl-[protein] + pyruvate + H(+) = N(6)-[(R)-S(8)-acetyldihydrolipoyl]-L-lysyl-[protein] + CO2. Functionally, the pyruvate dehydrogenase complex catalyzes the overall conversion of pyruvate to acetyl-CoA and CO(2). It contains multiple copies of three enzymatic components: pyruvate dehydrogenase (E1), dihydrolipoamide acetyltransferase (E2) and lipoamide dehydrogenase (E3). This Bacillus cereus protein is Pyruvate dehydrogenase E1 component subunit alpha.